A 997-amino-acid chain; its full sequence is MERDEYQLPNSHGKNTFLSRIFGLQSDEVNPSLNSQEMSNFPLPDIERGSSLLHSTNDSREDVDENDLRVPESDQGTSTEEEDEVDEEQVQAYAPQISDGLDGDHQLNSVTSKENVLETEKSNLERLVEGSTDDSVPKVGQLSSEEEEDNEFINNDGFDDDTPLFQKSKIHEFSSKKSNTIEDGKRPLFFRHILQNNRPQRDTQKLFTSSNAIHHDKDKSANNGPRNINGNQKHGTKYFGSATQPRFTGSPLNNTNRFTKLFPLRKPNLLSNISVLNNTPEDRINTLSVKERALWKWANVENLDIFLQDVYNYYLGNGFYCIILEKILNICTLLFVVFVSTYMGHCVDYSKLPTSHRVSDIIIDKCYSNSITGFTKFFLWMFYFFVILKIVQLYFDVQKLSELQNFYKYLLNISDDELQTLPWQNVIQQLMYLKDQNAMTANVVEVKAKNRIDAHDVANRIMRRENYLIALYNSDILNLSLPIPLFRTNVLTKTLEWNINLCVMGFVFNESGFIKQSILKPSQREFTREELQKRFMLAGFLNIILAPFLVTYFVLLYFFRYFNEYKTSPGSIGARQYTPIAEWKFREYNELYHIFKKRISLSTTLANKYVDQFPKEKTNLFLKFVSFICGSFVAILAFLTVFDPENFLNFEITSDRSVIFYITILGAIWSVSRNTITQEYHVFDPEETLKELYEYTHYLPKEWEGRYHKEEIKLEFCKLYNLRIVILLRELTSLMITPFVLWFSLPSSAGRIVDFFRENSEYVDGLGYVCKYAMFNMKNIDGEDTHSMDEDSLTKKIAVNGSHTLNSKRRSKFTAEDHSDKDLANNKMLQSYVYFMDDYSNSENLTGKYQLPAKKGYPNNEGDSFLNNKYSWRKQFQPGQKPELFRIGKHALGPGHNISPAIYSTRNPGKNWDNNNNGDDIKNGTNNATAKNDDNNGNNDHEYVLTESFLDSGAFPNHDVIDHNKMLNSNYNGNGILNKGGVLGLVKEYYKKSDVGR.

Residues 1–318 (MERDEYQLPN…DVYNYYLGNG (318 aa)) lie on the Cytoplasmic side of the membrane. Ser19 is subject to Phosphoserine; by ATG1. A compositionally biased stretch (polar residues) spans 29-39 (VNPSLNSQEMS). The tract at residues 29–88 (VNPSLNSQEMSNFPLPDIERGSSLLHSTNDSREDVDENDLRVPESDQGTSTEEEDEVDEE) is disordered. A compositionally biased stretch (acidic residues) spans 79-88 (TEEEDEVDEE). Residues Lys113 and Lys121 each participate in a glycyl lysine isopeptide (Lys-Gly) (interchain with G-Cter in ubiquitin) cross-link. Ser122 is subject to Phosphoserine. Disordered regions lie at residues 128–159 (VEGS…DGFD) and 213–235 (IHHD…QKHG). Lys138 is covalently cross-linked (Glycyl lysine isopeptide (Lys-Gly) (interchain with G-Cter in ubiquitin)). 2 positions are modified to phosphoserine: Ser143 and Ser144. Residues 144–159 (SEEEEDNEFINNDGFD) are compositionally biased toward acidic residues. Positions 221-233 (ANNGPRNINGNQK) are enriched in polar residues. Residues 319–339 (FYCIILEKILNICTLLFVVFV) form a helical membrane-spanning segment. Topologically, residues 340–376 (STYMGHCVDYSKLPTSHRVSDIIIDKCYSNSITGFTK) are lumenal. Residues 377–397 (FFLWMFYFFVILKIVQLYFDV) form a helical membrane-spanning segment. Residues 398–538 (QKLSELQNFY…EELQKRFMLA (141 aa)) lie on the Cytoplasmic side of the membrane. Residues 539 to 559 (GFLNIILAPFLVTYFVLLYFF) lie within the membrane without spanning it. Residues 560-620 (RYFNEYKTSP…DQFPKEKTNL (61 aa)) are Cytoplasmic-facing. Residues 621–641 (FLKFVSFICGSFVAILAFLTV) traverse the membrane as a helical segment. Topologically, residues 642 to 656 (FDPENFLNFEITSDR) are lumenal. Phosphoserine; by ATG1 is present on Ser657. The chain crosses the membrane as a helical span at residues 657–677 (SVIFYITILGAIWSVSRNTIT). The Cytoplasmic portion of the chain corresponds to 678–723 (QEYHVFDPEETLKELYEYTHYLPKEWEGRYHKEEIKLEFCKLYNLR). Residue Lys701 forms a Glycyl lysine isopeptide (Lys-Gly) (interchain with G-Cter in ubiquitin) linkage. The stretch at 724 to 744 (IVILLRELTSLMITPFVLWFS) is an intramembrane region. At 745 to 997 (LPSSAGRIVD…EYYKKSDVGR (253 aa)) the chain is on the cytoplasmic side. Phosphoserine is present on residues Ser787 and Ser792. A Phosphothreonine modification is found at Thr794. Ser802 bears the Phosphoserine; by ATG1 mark. Thr804 bears the Phosphothreonine; by ATG1 mark. Residues Ser831 and Ser842 each carry the phosphoserine; by ATG1 modification. Phosphoserine is present on Ser864. Residues Ser948 and Ser969 each carry the phosphoserine; by ATG1 modification.

Belongs to the ATG9 family. Homotrimer; forms a homotrimer with a central pore that forms a path between the two membrane leaflets. Interacts with ATG23 and ATG27 to form a cycling complex for trafficking to the PAS. Interacts (via N-terminus) with ATG11, required for recruitment of ATG9 to the PAS for the Cvt pathway during nutrient-rich conditions. Interacts (via N-terminus) with ATG17; required for recruitment to the PAS during autophagy and starved conditions. Interacts with ATG2 and ATG18; required for the retrieval of ATG9 from the PAS to the cytoplasmic pool. Interacts with ATG41. Interacts with the conserved oligomeric Golgi (COG) complex subunits COG3 and COG4. Interacts with TRS85. Phosphorylated by ATG1; phosphorylation is required for autophagy and cytoplasm to vacuole transport (Cvt) vesicle formation. Phosphorylation by ATG1 regulates ATG18 interaction and preautophagosome elongation. Phosphorylation at Ser-122 is required for selective autophagy by regulating anterograde trafficking and interaction with ATG23 and ATG27. Phosphorylation at Ser-122 prevents ubiquitination by the SCF(MET30) complex. Post-translationally, ubiquitinated by the SCF(MET30) complex in normal conditions, leading to its degradation by the proteasome, thereby preventing inappropriate induction of autophagy. Ubiquitination by the SCF(MET30) complex is prevented by phosphorylation at Ser-122.

Its subcellular location is the preautophagosomal structure membrane. The protein localises to the cytoplasmic vesicle membrane. It localises to the golgi apparatus membrane. It is found in the endoplasmic reticulum membrane. The protein resides in the mitochondrion membrane. The enzyme catalyses a 1,2-diacyl-sn-glycero-3-phosphocholine(in) = a 1,2-diacyl-sn-glycero-3-phosphocholine(out). It catalyses the reaction a 1,2-diacyl-sn-glycero-3-phospho-L-serine(in) = a 1,2-diacyl-sn-glycero-3-phospho-L-serine(out). It carries out the reaction a 1,2-diacyl-sn-glycero-3-phosphoethanolamine(in) = a 1,2-diacyl-sn-glycero-3-phosphoethanolamine(out). The catalysed reaction is a 1,2-diacyl-sn-glycero-3-phospho-(1D-myo-inositol-3-phosphate)(in) = a 1,2-diacyl-sn-glycero-3-phospho-(1D-myo-inositol-3-phosphate)(out). Phospholipid scramblase involved in autophagy and cytoplasm to vacuole transport (Cvt) vesicle formation. Cycles between the preautophagosomal structure/phagophore assembly site (PAS) and the cytoplasmic vesicle pool and supplies membrane for the growing autophagosome. Lipid scramblase activity plays a key role in preautophagosomal structure/phagophore assembly by distributing the phospholipids that arrive through ATG2 from the cytoplasmic to the luminal leaflet of the bilayer, thereby driving autophagosomal membrane expansion. Required for mitophagy. Also involved in endoplasmic reticulum-specific autophagic process and is essential for the survival of cells subjected to severe ER stress. Recruits vesicle-tethering proteins TRS85 and YPT1 to the autophagosome formation site. Also recruits ATG23 and ATG8 to the PAS. The polypeptide is Autophagy-related protein 9 (Saccharomyces cerevisiae (strain ATCC 204508 / S288c) (Baker's yeast)).